The primary structure comprises 466 residues: Chromogranin-A (466 aa).

Residues 1-18 (MRSSAALALLLCAGQVFA) form the signal peptide. A disulfide bond links Cys-35 and Cys-56. Residues 91–443 (AQQQQQQQQQ…ANRRAEDQEL (353 aa)) form a disordered region. A compositionally biased stretch (low complexity) spans 92-111 (QQQQQQQQQQQQQQQQQQQQ). Ser-114 is modified (phosphoserine). Over residues 131-155 (KHGDAASEAPSKDTVEKREDSDKGQ) the composition is skewed to basic and acidic residues. Positions 177–213 (ESSMMGNSQSPGEDTANNTQSPTSLPSQEHGIPQTTE) are enriched in polar residues. Ser-215 is subject to Phosphoserine. A compositionally biased stretch (acidic residues) spans 233 to 247 (KEEEEEEKEEEEEEK). Residues 248–259 (EEKAIAREKAGP) are compositionally biased toward basic and acidic residues. Residues Ser-288 and Ser-312 each carry the phosphoserine modification. Residues 305–314 (GKGELEHSQQ) are compositionally biased toward basic and acidic residues. Glycine amide is present on Gly-332. Positions 351-378 (RLSREWEDKRWSRMDQLAKELTAEKRLE) are enriched in basic and acidic residues. A phosphoserine mark is found at Ser-353 and Ser-386. A Methionine sulfoxide modification is found at Met-387. Residues 412 to 440 (SSREDSVEARGDFEEKKEEEGSANRRAED) show a composition bias toward basic and acidic residues. Phosphoserine occurs at positions 413, 417, and 433. Ser-433 is a glycosylation site (O-linked (Xyl...) (chondroitin sulfate) serine). Residue Gln-441 is modified to Pyrrolidone carboxylic acid. Ser-447 bears the Phosphoserine mark.

It belongs to the chromogranin/secretogranin protein family. Self-interacts; self-assembly is promoted in vitro by chondroitin sulfate attachment which occurs at mildly acidic pH conditions. Interacts with SCG3; this interaction is optimal in conditions mimicking the lumenal milieu of the trans-Golgi network, i.e. pH 5.5 and 10 mM Ca(+2). Interacts with ITPR1 in the secretory granules. In terms of processing, O-glycosylated; contains chondroitin sulfate (CS). CS attachment is pH-dependent, being observed at mildly acidic conditions of pH 5 but not at neutral pH, and promotes self-assembly in vitro. In terms of tissue distribution, expressed in the brain and adrenal and pituitary glands.

Its subcellular location is the cytoplasmic vesicle. The protein localises to the secretory vesicle. It is found in the neuronal dense core vesicle. It localises to the secreted. Its function is as follows. Strongly inhibits glucose induced insulin release from the pancreas. Catestatin inhibits catecholamine release from chromaffin cells and noradrenergic neurons by acting as a non-competitive nicotinic cholinergic antagonist. Can induce mast cell migration, degranulation and production of cytokines and chemokines. In terms of biological role, serpinin regulates granule biogenesis in endocrine cells by up-regulating the transcription of protease nexin 1 (SERPINE2) via a cAMP-PKA-SP1 pathway. This leads to inhibition of granule protein degradation in the Golgi complex which in turn promotes granule formation. Serpinin and pGlu-serpinin can enhance both myocardial contractility (inotropy) and relaxation (lusitropy) and this cardio-stimulation requires a beta 1-adrenergic receptor/adenylate cyclase/cAMP/PKA pathway. The protein is Chromogranin-A (Chga) of Rattus norvegicus (Rat).